The chain runs to 40 residues: Photosystem II reaction center protein J (40 aa).

The chain crosses the membrane as a helical span at residues 8–28 (IPLWIIGTVTGIFGIGLIGIF).

It belongs to the PsbJ family. As to quaternary structure, PSII is composed of 1 copy each of membrane proteins PsbA, PsbB, PsbC, PsbD, PsbE, PsbF, PsbH, PsbI, PsbJ, PsbK, PsbL, PsbM, PsbT, PsbX, PsbY, PsbZ, Psb30/Ycf12, at least 3 peripheral proteins of the oxygen-evolving complex and a large number of cofactors. It forms dimeric complexes.

The protein localises to the plastid membrane. One of the components of the core complex of photosystem II (PSII). PSII is a light-driven water:plastoquinone oxidoreductase that uses light energy to abstract electrons from H(2)O, generating O(2) and a proton gradient subsequently used for ATP formation. It consists of a core antenna complex that captures photons, and an electron transfer chain that converts photonic excitation into a charge separation. The protein is Photosystem II reaction center protein J of Cuscuta reflexa (Southern Asian dodder).